Reading from the N-terminus, the 827-residue chain is ADP-ribosylation factor GTPase-activating protein AGD3 (827 aa).

The region spanning 1 to 225 is the BAR domain; sequence MHFTKLDDSP…INQVLTYAQQ (225 aa). Coiled coils occupy residues 116–139 and 223–253; these read HEVK…REKF and AQQS…RESR. Residues 246 to 269 are disordered; that stretch reads RQVDRESRWGSNGSNGSPNGDGIQ. The span at 255-267 shows a compositional bias: low complexity; that stretch reads GSNGSNGSPNGDG. The region spanning 292–430 is the PH domain; it reads QTIRQGYLSK…WIEKITGVIA (139 aa). A disordered region spans residues 439-467; the sequence is EQRLPGSPMGSGHHRSASESSSYESSEYD. Phosphoserine is present on serine 445. Positions 501-643 constitute an Arf-GAP domain; it reads EKPIDALRKV…LFVRRSRDSD (143 aa). Residues 516–539 form a C4-type zinc finger; it reads CADCGAPEPDWASLNLGVLVCIEC. ANK repeat units follow at residues 728–757, 761–790, and 794–825; these read GGSS…NVNA, SGQT…DPEA, and EGKT…YNHR.

As to quaternary structure, homodimer. Interacts with DRP1A. Interacts with VAB. In terms of tissue distribution, broadly expressed. Detected in developing veins of the leaf and root. Detected in roots, hypocotyls, cotyledons, leaves, siliques and shoot apical meristems.

It is found in the golgi apparatus. It localises to the trans-Golgi network. ARF GAP activity strongly enhanced by phosphatidylinositol 4-monophosphate (PIP) and moderately enhanced by phosphatidylinositol 4,5-bisphosphate (PIP2). In terms of biological role, GTPase-activating protein (GAP) for ADP ribosylation factor (ARF). Involved in the spatial control of provascular differentiation. Required for the formation of the normal pattern of continuous secondary veins. Involved in auxin signaling but not in polar auxin transport or in auxin responses. Required for PIN1 internalization in roots. The protein is ADP-ribosylation factor GTPase-activating protein AGD3 (AGD3) of Arabidopsis thaliana (Mouse-ear cress).